The chain runs to 91 residues: Probable Fe(2+)-trafficking protein (91 aa).

The protein belongs to the Fe(2+)-trafficking protein family. Monomer.

Functionally, could be a mediator in iron transactions between iron acquisition and iron-requiring processes, such as synthesis and/or repair of Fe-S clusters in biosynthetic enzymes. This chain is Probable Fe(2+)-trafficking protein, found in Klebsiella pneumoniae subsp. pneumoniae (strain ATCC 700721 / MGH 78578).